The chain runs to 478 residues: Protein WVD2-like 7 (478 aa).

2 disordered regions span residues 201–326 (DSAL…TGST) and 385–420 (PMPS…SASI). Basic and acidic residues predominate over residues 208–217 (AGSKLDEHAS). Composition is skewed to polar residues over residues 219-232 (KPSN…SSVN) and 264-277 (GSSL…NVDA). Over residues 278–289 (KSQKELRPKKTI) the composition is skewed to basic and acidic residues. 2 stretches are compositionally biased toward polar residues: residues 309 to 326 (RCKT…TGST) and 407 to 420 (VAQS…SASI).

The protein belongs to the TPX2 family. Expressed in seedlings.

The protein localises to the cytoplasm. It localises to the cytoskeleton. Its function is as follows. Microtubule-associated protein (MAP) that regulates the orientation of interphase cortical microtubules. This is Protein WVD2-like 7 from Arabidopsis thaliana (Mouse-ear cress).